Here is an 83-residue protein sequence, read N- to C-terminus: Small ribosomal subunit protein bS20 (83 aa).

This sequence belongs to the bacterial ribosomal protein bS20 family.

Binds directly to 16S ribosomal RNA. This chain is Small ribosomal subunit protein bS20, found in Lactobacillus delbrueckii subsp. bulgaricus (strain ATCC 11842 / DSM 20081 / BCRC 10696 / JCM 1002 / NBRC 13953 / NCIMB 11778 / NCTC 12712 / WDCM 00102 / Lb 14).